The sequence spans 165 residues: Large ribosomal subunit protein uL10 (165 aa).

This sequence belongs to the universal ribosomal protein uL10 family. Part of the ribosomal stalk of the 50S ribosomal subunit. The N-terminus interacts with L11 and the large rRNA to form the base of the stalk. The C-terminus forms an elongated spine to which L12 dimers bind in a sequential fashion forming a multimeric L10(L12)X complex.

Its function is as follows. Forms part of the ribosomal stalk, playing a central role in the interaction of the ribosome with GTP-bound translation factors. The polypeptide is Large ribosomal subunit protein uL10 (Burkholderia thailandensis (strain ATCC 700388 / DSM 13276 / CCUG 48851 / CIP 106301 / E264)).